A 508-amino-acid chain; its full sequence is Photosystem II CP47 reaction center protein (508 aa).

6 consecutive transmembrane segments (helical) span residues 21–36, 101–115, 140–156, 203–218, 237–252, and 457–472; these read AVHL…WAGS, IVLS…IWHW, GIHL…FGAF, IAAG…FHLS, VLSS…AFVV, and CFAL…HGSR.

Belongs to the PsbB/PsbC family. PsbB subfamily. PSII is composed of 1 copy each of membrane proteins PsbA, PsbB, PsbC, PsbD, PsbE, PsbF, PsbH, PsbI, PsbJ, PsbK, PsbL, PsbM, PsbT, PsbX, PsbY, PsbZ, Psb30/Ycf12, at least 3 peripheral proteins of the oxygen-evolving complex and a large number of cofactors. It forms dimeric complexes. Requires Binds multiple chlorophylls. PSII binds additional chlorophylls, carotenoids and specific lipids. as cofactor.

Its subcellular location is the plastid. The protein localises to the chloroplast thylakoid membrane. In terms of biological role, one of the components of the core complex of photosystem II (PSII). It binds chlorophyll and helps catalyze the primary light-induced photochemical processes of PSII. PSII is a light-driven water:plastoquinone oxidoreductase, using light energy to abstract electrons from H(2)O, generating O(2) and a proton gradient subsequently used for ATP formation. The protein is Photosystem II CP47 reaction center protein of Zygnema circumcarinatum (Green alga).